Reading from the N-terminus, the 488-residue chain is Aspartyl/glutamyl-tRNA(Asn/Gln) amidotransferase subunit B (488 aa).

The protein belongs to the GatB/GatE family. GatB subfamily. In terms of assembly, heterotrimer of A, B and C subunits.

The catalysed reaction is L-glutamyl-tRNA(Gln) + L-glutamine + ATP + H2O = L-glutaminyl-tRNA(Gln) + L-glutamate + ADP + phosphate + H(+). It carries out the reaction L-aspartyl-tRNA(Asn) + L-glutamine + ATP + H2O = L-asparaginyl-tRNA(Asn) + L-glutamate + ADP + phosphate + 2 H(+). In terms of biological role, allows the formation of correctly charged Asn-tRNA(Asn) or Gln-tRNA(Gln) through the transamidation of misacylated Asp-tRNA(Asn) or Glu-tRNA(Gln) in organisms which lack either or both of asparaginyl-tRNA or glutaminyl-tRNA synthetases. The reaction takes place in the presence of glutamine and ATP through an activated phospho-Asp-tRNA(Asn) or phospho-Glu-tRNA(Gln). The polypeptide is Aspartyl/glutamyl-tRNA(Asn/Gln) amidotransferase subunit B (Chlamydia trachomatis serovar A (strain ATCC VR-571B / DSM 19440 / HAR-13)).